The sequence spans 93 residues: uncharacterized protein (93 aa).

It to B.subtilis YdcN C-terminal region.

This is an uncharacterized protein from Methanocaldococcus jannaschii (strain ATCC 43067 / DSM 2661 / JAL-1 / JCM 10045 / NBRC 100440) (Methanococcus jannaschii).